We begin with the raw amino-acid sequence, 74 residues long: Conotoxin Vi15a (74 aa).

The signal sequence occupies residues 1–19; it reads MMPVILLLLLSLAIRCADG. Residues 20-43 constitute a propeptide that is removed on maturation; sequence KAVQGDSDPSASLLTGDKNHDLPV. Tryptophan amide is present on Trp72.

Contains four disulfide bonds. In terms of tissue distribution, expressed by the venom duct.

It is found in the secreted. The protein is Conotoxin Vi15a of Conus virgo (Virgin cone).